A 43-amino-acid chain; its full sequence is uncharacterized protein (43 aa).

This is an uncharacterized protein from Schizosaccharomyces pombe (strain 972 / ATCC 24843) (Fission yeast).